The following is a 380-amino-acid chain: Probable inactive dehydrogenase easA (380 aa).

FMN is bound by residues 25–27 (PMT), A60, Q102, and H171. The substrate site is built by H171 and N174. Residues K223, G299, 324-325 (GR), and R325 contribute to the FMN site. Y352 contributes to the substrate binding site.

Belongs to the NADH:flavin oxidoreductase/NADH oxidase family.

Functionally, probable inactive dehydrogenase; part of the gene cluster that mediates the biosynthesis of fungal ergot alkaloid. DmaW catalyzes the first step of ergot alkaloid biosynthesis by condensing dimethylallyl diphosphate (DMAP) and tryptophan to form 4-dimethylallyl-L-tryptophan. The second step is catalyzed by the methyltransferase easF that methylates 4-dimethylallyl-L-tryptophan in the presence of S-adenosyl-L-methionine, resulting in the formation of 4-dimethylallyl-L-abrine. The catalase easC and the FAD-dependent oxidoreductase easE then transform 4-dimethylallyl-L-abrine to chanoclavine-I which is further oxidized by easD in the presence of NAD(+), resulting in the formation of chanoclavine-I aldehyde. Agroclavine dehydrogenase easG then mediates the conversion of chanoclavine-I aldehyde to agroclavine via a non-enzymatic adduct reaction: the substrate is an iminium intermediate that is formed spontaneously from chanoclavine-I aldehyde in the presence of glutathione. The presence of easA is not required to complete this reaction. Further conversion of agroclavine to paspalic acid is a two-step process involving oxidation of agroclavine to elymoclavine and of elymoclavine to paspalic acid, the second step being performed by the elymoclavine oxidase cloA. Paspalic acid is then further converted to D-lysergic acid. Ergopeptines are assembled from D-lysergic acid and three different amino acids by the D-lysergyl-peptide-synthetases composed each of a monomudular and a trimodular nonribosomal peptide synthetase subunit. LpsB and lpsC encode the monomodular subunits responsible for D-lysergic acid activation and incorporation into the ergopeptine backbone. LpsA1 and A2 subunits encode the trimodular nonribosomal peptide synthetase assembling the tripeptide portion of ergopeptines. LpsA1 is responsible for formation of the major ergopeptine, ergotamine, and lpsA2 for alpha-ergocryptine, the minor ergopeptine of the total alkaloid mixture elaborated by C.purpurea. D-lysergyl-tripeptides are assembled by the nonribosomal peptide synthetases and released as N-(D-lysergyl-aminoacyl)-lactams. Cyclolization of the D-lysergyl-tripeptides is performed by the Fe(2+)/2-ketoglutarate-dependent dioxygenase easH which introduces a hydroxyl group into N-(D-lysergyl-aminoacyl)-lactam at alpha-C of the aminoacyl residue followed by spontaneous condensation with the terminal lactam carbonyl group. The polypeptide is Probable inactive dehydrogenase easA (Claviceps purpurea (Ergot fungus)).